The sequence spans 208 residues: MSNEPPPPYPGGPTAPLLEEKSGAPLTPGRTSPAVMQPPPGMPLPSADIAPPPYEPPGQPVPQPGFVPPHMNADGTYMPAGFYPPPGPHPPMGYYPPGPYPPGPYPGPGGHTATVLVPSGAATTVTVLQGEIFEGAPVQTVCPHCQQAITTKISYEIGLMNFVLGFFCCFMGCDLGCCLIPCLINDFKDVTHTCPSCKAYICTYKRLC.

Pro residues-rich tracts occupy residues 1–13 and 50–67; these read MSNE…PGGP and APPP…PGFV. The tract at residues 1 to 70 is disordered; the sequence is MSNEPPPPYP…VPQPGFVPPH (70 aa). The LITAF domain maps to 122-206; it reads ATTVTVLQGE…CKAYICTYKR (85 aa). Zn(2+) is bound by residues Cys-142 and Cys-145. The tract at residues 164–184 is membrane-binding amphipathic helix; it reads LGFFCCFMGCDLGCCLIPCLI. Residues Cys-194 and Cys-197 each contribute to the Zn(2+) site.

This sequence belongs to the CDIP1/LITAF family.

The protein localises to the late endosome membrane. It localises to the lysosome membrane. Its function is as follows. Acts as an important p53/TP53-apoptotic effector. Regulates TNF-alpha-mediated apoptosis in a p53/TP53-dependent manner. The protein is Cell death-inducing p53-target protein 1 (Cdip1) of Mus musculus (Mouse).